Here is a 565-residue protein sequence, read N- to C-terminus: Potassium-transporting ATPase potassium-binding subunit (565 aa).

12 helical membrane passes run 6 to 26, 63 to 83, 132 to 152, 175 to 195, 250 to 270, 283 to 303, 327 to 347, 354 to 374, 379 to 399, 418 to 438, 483 to 503, and 524 to 544; these read LMLLGLLILLLLILAPLLGSL, LLAILAFNLLGIVLLFALLMA, GLGVQNFLSAASGIAVLFALI, LYVLLPLSLLLSLLFVSQGVI, LSNLLQMVAIFLLPTALCFAF, LLWTMSLIFIVAAGCVMYAEL, FGILASALYAVVTTAASCGAV, FTALGGMVPMWLMQIGEVVFG, GLYGMLLFVLLTVFIAGLMIG, ALAILIPPALVLTGSAIALLC, LLLALVMLIGRFGVIIPVMAI, and GALFVSLLIGTILLVGALTFI.

Belongs to the KdpA family. In terms of assembly, the system is composed of three essential subunits: KdpA, KdpB and KdpC.

The protein localises to the cell inner membrane. Part of the high-affinity ATP-driven potassium transport (or Kdp) system, which catalyzes the hydrolysis of ATP coupled with the electrogenic transport of potassium into the cytoplasm. This subunit binds the periplasmic potassium ions and delivers the ions to the membrane domain of KdpB through an intramembrane tunnel. The polypeptide is Potassium-transporting ATPase potassium-binding subunit (Edwardsiella ictaluri (strain 93-146)).